A 775-amino-acid polypeptide reads, in one-letter code: Homoaconitase, mitochondrial (775 aa).

The transit peptide at 1–29 (MQSRLMPSGGPGRRWAFLRVPSTPQRRAF) directs the protein to the mitochondrion. Positions 392, 461, and 464 each coordinate [4Fe-4S] cluster.

Belongs to the aconitase/IPM isomerase family. Requires [4Fe-4S] cluster as cofactor.

The protein localises to the mitochondrion. The catalysed reaction is (2R,3S)-homoisocitrate = cis-homoaconitate + H2O. The protein operates within amino-acid biosynthesis; L-lysine biosynthesis via AAA pathway; L-alpha-aminoadipate from 2-oxoglutarate: step 3/5. Functionally, catalyzes the reversible hydration of cis-homoaconitate to (2R,3S)-homoisocitrate, a step in the alpha-aminoadipate pathway for lysine biosynthesis. The sequence is that of Homoaconitase, mitochondrial (lys4) from Aspergillus oryzae (strain ATCC 42149 / RIB 40) (Yellow koji mold).